A 933-amino-acid polypeptide reads, in one-letter code: Phospholipase SGR2 (933 aa).

A compositionally biased stretch (basic and acidic residues) spans 1-14; it reads MEDRETHLGTREVN. Residues 1–22 are disordered; sequence MEDRETHLGTREVNETSPDLLK. The active site involves S444. 2 disordered regions span residues 475-517 and 553-598; these read PDEE…GQDN and RGGQ…ESVN. The segment covering 505-517 has biased composition (polar residues); that stretch reads QLNNPEKITGQDN. Positions 553-563 are enriched in basic and acidic residues; the sequence is RGGQEDDHHDS. A coiled-coil region spans residues 593–631; that stretch reads DKESVNSNNEERIKLLQDEVNSLRSKVAQLLSENARILS. One can recognise a DDHD domain in the interval 669-868; sequence LEFKVDTFFA…ALFIIKHLYR (200 aa). Positions 871 to 903 are disordered; the sequence is PDGPNSPTESTEGDDSPKDSSRPHSWIDRREAD. Residues 885-902 are compositionally biased toward basic and acidic residues; that stretch reads DSPKDSSRPHSWIDRREA.

Forms oligomers. Expressed in roots, hypocotyls, leaves, stems and floral buds, and, at low levels, in siliques.

It is found in the vacuole membrane. Functionally, involved in vacuolar formation or function (e.g. formation of vacuolar membrane 'bulbs'). Required for amyloplast sedimentation in the endodermis during shoot gravitropism, which are thus acting as statoliths. Particularly important for the negative gravitropism leading to leaf movement observed in darkness. The sequence is that of Phospholipase SGR2 (SGR2) from Arabidopsis thaliana (Mouse-ear cress).